The primary structure comprises 189 residues: Protein F29A7.6 (189 aa).

The interval 124 to 161 is disordered; that stretch reads KSLGGQKLAALDKKSQSKRERRQQNERNEETTGGRRFN. A compositionally biased stretch (basic and acidic residues) spans 133–161; it reads ALDKKSQSKRERRQQNERNEETTGGRRFN.

It belongs to the MPP6 family.

The polypeptide is Protein F29A7.6 (Caenorhabditis elegans).